Consider the following 378-residue polypeptide: Quinolinate synthase (378 aa).

Residues His-59 and Ser-80 each coordinate iminosuccinate. Cys-125 provides a ligand contact to [4Fe-4S] cluster. Iminosuccinate is bound by residues Tyr-151–Asn-153 and Ser-168. Residue Cys-212 coordinates [4Fe-4S] cluster. Iminosuccinate-binding positions include His-238–Glu-240 and Thr-255. Cys-309 is a binding site for [4Fe-4S] cluster.

It belongs to the quinolinate synthase family. Type 1 subfamily. Requires [4Fe-4S] cluster as cofactor.

The protein localises to the cytoplasm. It carries out the reaction iminosuccinate + dihydroxyacetone phosphate = quinolinate + phosphate + 2 H2O + H(+). The protein operates within cofactor biosynthesis; NAD(+) biosynthesis; quinolinate from iminoaspartate: step 1/1. Its function is as follows. Catalyzes the condensation of iminoaspartate with dihydroxyacetone phosphate to form quinolinate. The polypeptide is Quinolinate synthase (Burkholderia mallei (strain NCTC 10247)).